The following is a 149-amino-acid chain: Hydroalkoxylation enzyme phnH (149 aa).

An N-terminal signal peptide occupies residues 1-18 (MKFTYLVSLAAFAVTALG). N-linked (GlcNAc...) asparagine glycosylation is found at N33 and N127.

Homotetramer.

It catalyses the reaction 2,4,7,9-tetrahydroxy-6-methyl-8-(2-methylbut-3-en-2-yl)-1-oxo-1H-phenalen-3-ol = (2'R)-atrovenetin. It participates in secondary metabolite biosynthesis. Hydroalkoxylation enzyme; part of the gene cluster that mediates the biosynthesis of phenalenones such as herqueinone, compounds that have been reported to treat tumors, bacterial infections and/or mycoses, and rheumatic diseases. The non-reducing polyketide synthase phnA synthesizes the heptaketide backbone and cyclizes it into the angular, hemiketal-containing naphtho-gamma-pyrone prephenalenone. The product template (PT) domain of phnA catalyzes only the C4-C9 aldol condensation, which is unprecedented among known PT domains. The transformation of prephenalenone to phenalenones requires an FAD-dependent monooxygenase phnB, which catalyzes the C2 aromatic hydroxylation of prephenalenone and ring opening of the gamma-pyrone ring simultaneously. Subsequent intramolecular deprotonation of C3 phenolic oxygen accelerates phenalenone ring closure to yield the tricyclic phenalenone core with a C2 hydroxylation. The prenyltransferase phnF further catalyzes reverse C-prenylation of phenalenone by direct electrophilic substitution at C6, or possibly via first a forward O-prenylation of a neighboring phenol in phenalenone, followed by a Claisen rearrangement. The hydroalkoxylation enzyme phnH catalyzes the 5-exo-trig cyclization via acid catalysis after the spontaneous deprotonation of 7-OH, which leads to the formation of the dihydrobenzofuran atrovenetin. Atrovenetin is further converted to deoxyherqueinone by the O-methyltransferase phnC which can methylate C2-OH to stabilize the northern portion of the phenalenone core. Finally, the oxidoreductase phnG converts deoxyherqueinone to herqueinone via C6 hydroxylation. The protein is Hydroalkoxylation enzyme phnH of Penicillium herquei.